The chain runs to 349 residues: Oxygen-dependent coproporphyrinogen-III oxidase (349 aa).

Disordered regions lie at residues 1–21 (MGAS…KRAR) and 37–60 (SLDG…GRSK). Ser105 provides a ligand contact to substrate. Residues His109 and His119 each coordinate a divalent metal cation. Residue His119 is the Proton donor of the active site. Substrate is bound at residue 121–123 (NYR). Residues His153 and His183 each contribute to the a divalent metal cation site. Residues 273–308 (YAEFNLVWDRGTIFGLQTNGRTESILMSLPPLARWE) are important for dimerization.

It belongs to the aerobic coproporphyrinogen-III oxidase family. As to quaternary structure, homodimer. The cofactor is a divalent metal cation.

Its subcellular location is the cytoplasm. It carries out the reaction coproporphyrinogen III + O2 + 2 H(+) = protoporphyrinogen IX + 2 CO2 + 2 H2O. It participates in porphyrin-containing compound metabolism; protoporphyrin-IX biosynthesis; protoporphyrinogen-IX from coproporphyrinogen-III (O2 route): step 1/1. Functionally, involved in the heme and chlorophyll biosynthesis. Catalyzes the aerobic oxidative decarboxylation of propionate groups of rings A and B of coproporphyrinogen-III to yield the vinyl groups in protoporphyrinogen-IX. The polypeptide is Oxygen-dependent coproporphyrinogen-III oxidase (Prochlorococcus marinus (strain MIT 9313)).